The chain runs to 169 residues: Protein ORFb in retron Ec67 (169 aa).

The protein is Protein ORFb in retron Ec67 of Escherichia coli.